A 224-amino-acid polypeptide reads, in one-letter code: ATP-dependent dethiobiotin synthetase BioD (224 aa).

14 to 19 is a binding site for ATP; sequence GIGKTV. Thr-18 contributes to the Mg(2+) binding site. Residue Lys-39 is part of the active site. Substrate is bound at residue Ser-43. Residues Asp-56, 117–120, and 177–178 contribute to the ATP site; these read EGVG and NE. Residues Asp-56 and Glu-117 each contribute to the Mg(2+) site.

It belongs to the dethiobiotin synthetase family. In terms of assembly, homodimer. The cofactor is Mg(2+).

The protein localises to the cytoplasm. The catalysed reaction is (7R,8S)-7,8-diammoniononanoate + CO2 + ATP = (4R,5S)-dethiobiotin + ADP + phosphate + 3 H(+). It participates in cofactor biosynthesis; biotin biosynthesis; biotin from 7,8-diaminononanoate: step 1/2. Catalyzes a mechanistically unusual reaction, the ATP-dependent insertion of CO2 between the N7 and N8 nitrogen atoms of 7,8-diaminopelargonic acid (DAPA, also called 7,8-diammoniononanoate) to form a ureido ring. This chain is ATP-dependent dethiobiotin synthetase BioD, found in Xanthomonas campestris pv. campestris (strain B100).